The following is a 98-amino-acid chain: NADH-ubiquinone oxidoreductase chain 4L (98 aa).

3 helical membrane-spanning segments follow: residues M1–M21, S29–L49, and V61–V81.

It belongs to the complex I subunit 4L family. In terms of assembly, core subunit of respiratory chain NADH dehydrogenase (Complex I) which is composed of 45 different subunits.

The protein localises to the mitochondrion inner membrane. It carries out the reaction a ubiquinone + NADH + 5 H(+)(in) = a ubiquinol + NAD(+) + 4 H(+)(out). In terms of biological role, core subunit of the mitochondrial membrane respiratory chain NADH dehydrogenase (Complex I) which catalyzes electron transfer from NADH through the respiratory chain, using ubiquinone as an electron acceptor. Part of the enzyme membrane arm which is embedded in the lipid bilayer and involved in proton translocation. The sequence is that of NADH-ubiquinone oxidoreductase chain 4L (MT-ND4L) from Tamandua tetradactyla (Southern anteater).